Reading from the N-terminus, the 833-residue chain is Homeobox-leucine zipper protein ATHB-8 (833 aa).

Residues 12–75 (DNGKYVRYTP…NRRCREKQRK (64 aa)) constitute a DNA-binding region (homeobox). Positions 70–108 (REKQRKEASRLQAVNRKLTAMNKLLMEENDRLQKQVSHL) form a coiled coil. One can recognise an START domain in the interval 150–378 (RDASPAGLLS…ISQEISQPNV (229 aa)).

This sequence belongs to the HD-ZIP homeobox family. Class III subfamily. As to quaternary structure, interacts with ESR1 and ESR2. Interacts with ZPR3.

It localises to the nucleus. Its function is as follows. Probable transcription factor involved in the regulation of vascular development. May promote differentiation of precambial and cambial cells. This Arabidopsis thaliana (Mouse-ear cress) protein is Homeobox-leucine zipper protein ATHB-8 (ATHB-8).